We begin with the raw amino-acid sequence, 786 residues long: Spermatogenesis-associated protein 20 (786 aa).

Residues 1–22 (MLGARAWLGRVLLLPRAGAGLA) form the signal peptide. Residues 23–61 (ASRRGSSSRDKDRSATVSSSVPMPAGGKGSHPSSTPQRV) are disordered. A Phosphoserine modification is found at Ser649.

Its subcellular location is the secreted. Its function is as follows. May play a role in fertility regulation. In Homo sapiens (Human), this protein is Spermatogenesis-associated protein 20 (SPATA20).